The chain runs to 87 residues: Small ribosomal subunit protein bS21m (87 aa).

It belongs to the bacterial ribosomal protein bS21 family. In terms of assembly, component of the mitochondrial ribosome small subunit (28S) which comprises a 12S rRNA and about 30 distinct proteins.

The protein localises to the mitochondrion. This chain is Small ribosomal subunit protein bS21m (Mrps21), found in Mus musculus (Mouse).